Reading from the N-terminus, the 296-residue chain is uncharacterized protein (296 aa).

A run of 2 helical transmembrane segments spans residues 82-102 (VVAP…WSVQ) and 117-137 (ISVL…SAIF).

Its subcellular location is the cell membrane. This is an uncharacterized protein from Sinorhizobium fredii (strain NBRC 101917 / NGR234).